Consider the following 523-residue polypeptide: Calcium uptake protein 3, mitochondrial (523 aa).

A mitochondrion-targeting transit peptide spans 1 to 6 (MAALRR). Residues 18–48 (LAPQQPFLSPWGRPAGTAPGMSGRPFSGREE) are disordered. The EF-hand 1 domain occupies 225-260 (KPHAGFRIAFNMFDTDGNEMVDKKEFLVLQEIFRKK). Ca(2+)-binding residues include Asp238, Asp240, Asn242, Met244, Asp246, and Glu249. The EF-hand 2; degenerate domain occupies 414–429 (ITFDEFRSFFQFLNNL). The region spanning 463-498 (LSPHLVNTVFKIFDVDKDDQLSYKEFIGIMKDRLHR) is the EF-hand 3 domain. Residues Asp476, Asp478, Asp480, Gln482, and Glu487 each contribute to the Ca(2+) site.

The protein belongs to the MICU1 family. MICU3 subfamily. In terms of assembly, heterodimer; disulfide-linked; heterodimerizes with MICU1. Component of the uniplex complex, composed of MCU, EMRE/SMDT1, MICU1 and MICU3 in a 4:4:1:1 stoichiometry.

It localises to the mitochondrion intermembrane space. Its subcellular location is the mitochondrion inner membrane. Tissue-specific calcium sensor of the mitochondrial calcium uniporter (MCU) channel, which specifically regulates MCU channel activity in the central nervous system and skeletal muscle. Senses calcium level via its EF-hand domains: compared to MICU1 and MICU2, MICU3 has a higher affinity for calcium. MICU1 and MICU3 form a disulfide-linked heterodimer that stimulates and inhibits MCU activity, depending on the concentration of calcium. At low calcium levels, MICU1 occludes the pore of the MCU channel, preventing mitochondrial calcium uptake. At higher calcium levels, calcium-binding to MICU1 and MICU3 induces a conformational change that weakens MCU-MICU1 interactions and moves the MICU1-MICU3 heterodimer away from the pore, allowing calcium permeation through the MCU channel. The high calcium affinity of MICU3 lowers the calcium threshold necessary for calcium permeation through the MCU channel. The MICU1-MICU3 heterodimer promotes flexibility of neurotransmission in neuronal cells by enhancing mitochondrial calcium uptake in presynapses. It is also required to increase mitochondrial calcium uptake in skeletal muscle cells, thereby increasing ATP production. This chain is Calcium uptake protein 3, mitochondrial, found in Rattus norvegicus (Rat).